A 502-amino-acid polypeptide reads, in one-letter code: MEKWWFNSMLSNEELEHRWGLSKSMESLGPIGNTRGSEDPIINDTDKNIHSYSWSDSGSYSCSNVDHFFGVSDIWSFISDETFLVRDSNGKGYSVYFDIENRIFEIDNDSSFLSELESSFSSYLSNGSKNDNRYYDSYMYDTKYSWNNHMNSCIDSYLRSEISIDSYISTGSDNFSDSYIYSYIFSEKVSGSDSESSSIRTSGNDSNFNVRERDNDFDRNQKYGRLWVQCENCYELNYRSFFRSKMNICEQCGYHLKMNSLDRIELSIDSGTWNPMDDDMVSMDPIEFHSMEEPYRDRIDSYQRNTGLTEAVQTGIGQLNGIPIAIGVMDFQFMGGSMGSVVGEKITRLIEYATNESIPVIMVCASGGARMQEGSLSLMQMAKISSASYNYQLNKKLFYVSILTSPTTGGVTASFGMLGDIIIAEPNAYIAFAGKRVIEQTLNKTVPDGSQVAEYSFHKGLFDPIVPRNPLKGVLSELFQLHGFFPLNQNSSGARGSVICSE.

A compositionally biased stretch (low complexity) spans 191 to 202; it reads GSDSESSSIRTS. The interval 191–212 is disordered; it reads GSDSESSSIRTSGNDSNFNVRE. Residues 226–497 form the CoA carboxyltransferase N-terminal domain; it reads LWVQCENCYE…NQNSSGARGS (272 aa). Residues Cys230, Cys233, Cys249, and Cys252 each contribute to the Zn(2+) site. Residues 230 to 252 form a C4-type zinc finger; that stretch reads CENCYELNYRSFFRSKMNICEQC.

Belongs to the AccD/PCCB family. In terms of assembly, acetyl-CoA carboxylase is a heterohexamer composed of biotin carboxyl carrier protein, biotin carboxylase and 2 subunits each of ACCase subunit alpha and ACCase plastid-coded subunit beta (accD). The cofactor is Zn(2+).

It localises to the plastid. Its subcellular location is the chloroplast stroma. It catalyses the reaction N(6)-carboxybiotinyl-L-lysyl-[protein] + acetyl-CoA = N(6)-biotinyl-L-lysyl-[protein] + malonyl-CoA. It participates in lipid metabolism; malonyl-CoA biosynthesis; malonyl-CoA from acetyl-CoA: step 1/1. In terms of biological role, component of the acetyl coenzyme A carboxylase (ACC) complex. Biotin carboxylase (BC) catalyzes the carboxylation of biotin on its carrier protein (BCCP) and then the CO(2) group is transferred by the transcarboxylase to acetyl-CoA to form malonyl-CoA. This is Acetyl-coenzyme A carboxylase carboxyl transferase subunit beta, chloroplastic from Chloranthus spicatus (Chulantree).